The following is a 321-amino-acid chain: Coproporphyrin III ferrochelatase (321 aa).

Positions 185 and 267 each coordinate Fe(2+).

The protein belongs to the ferrochelatase family.

The protein resides in the cytoplasm. It catalyses the reaction Fe-coproporphyrin III + 2 H(+) = coproporphyrin III + Fe(2+). Its pathway is porphyrin-containing compound metabolism; protoheme biosynthesis. Functionally, involved in coproporphyrin-dependent heme b biosynthesis. Catalyzes the insertion of ferrous iron into coproporphyrin III to form Fe-coproporphyrin III. The chain is Coproporphyrin III ferrochelatase from Lacticaseibacillus casei (strain BL23) (Lactobacillus casei).